The sequence spans 164 residues: 3-hydroxyacyl-[acyl-carrier-protein] dehydratase FabZ (164 aa).

His61 is a catalytic residue.

Belongs to the thioester dehydratase family. FabZ subfamily.

The protein localises to the cytoplasm. It carries out the reaction a (3R)-hydroxyacyl-[ACP] = a (2E)-enoyl-[ACP] + H2O. In terms of biological role, involved in unsaturated fatty acids biosynthesis. Catalyzes the dehydration of short chain beta-hydroxyacyl-ACPs and long chain saturated and unsaturated beta-hydroxyacyl-ACPs. This chain is 3-hydroxyacyl-[acyl-carrier-protein] dehydratase FabZ, found in Ralstonia nicotianae (strain ATCC BAA-1114 / GMI1000) (Ralstonia solanacearum).